The chain runs to 378 residues: Cobalt-precorrin-5B C(1)-methyltransferase (378 aa).

It belongs to the CbiD family.

It catalyses the reaction Co-precorrin-5B + S-adenosyl-L-methionine = Co-precorrin-6A + S-adenosyl-L-homocysteine. The protein operates within cofactor biosynthesis; adenosylcobalamin biosynthesis; cob(II)yrinate a,c-diamide from sirohydrochlorin (anaerobic route): step 6/10. Functionally, catalyzes the methylation of C-1 in cobalt-precorrin-5B to form cobalt-precorrin-6A. This is Cobalt-precorrin-5B C(1)-methyltransferase from Synechocystis sp. (strain ATCC 27184 / PCC 6803 / Kazusa).